The following is a 353-amino-acid chain: Dimethylsulfoniopropionate lyase 2 (353 aa).

Catalysis depends on proton donor/acceptor residues Cys125 and Cys274. The interval 326–353 (DPNETDVSKGRPTKAEHRFGPEFEEMLQ) is disordered. A compositionally biased stretch (basic and acidic residues) spans 331–346 (DVSKGRPTKAEHRFGP).

This sequence belongs to the aspartate/glutamate racemases family. ALMA1 subfamily. As to quaternary structure, homotetramer.

The enzyme catalyses S,S-dimethyl-beta-propiothetin = acrylate + dimethyl sulfide + H(+). Mediates cleavage of dimethylsulfoniopropionate (DMSP) into dimethyl sulfide (DMS) and acrylate. DMS is the principal form by which sulfur is transported from oceans to the atmosphere and is a key component of the ocean sulfur cycle. In Emiliania huxleyi (strain CCMP1516), this protein is Dimethylsulfoniopropionate lyase 2.